The primary structure comprises 173 residues: Crossover junction endodeoxyribonuclease RuvC (173 aa).

Catalysis depends on residues Asp11, Glu71, and Asp143. Asp11, Glu71, and Asp143 together coordinate Mg(2+).

Belongs to the RuvC family. In terms of assembly, homodimer which binds Holliday junction (HJ) DNA. The HJ becomes 2-fold symmetrical on binding to RuvC with unstacked arms; it has a different conformation from HJ DNA in complex with RuvA. In the full resolvosome a probable DNA-RuvA(4)-RuvB(12)-RuvC(2) complex forms which resolves the HJ. Mg(2+) serves as cofactor.

The protein localises to the cytoplasm. It carries out the reaction Endonucleolytic cleavage at a junction such as a reciprocal single-stranded crossover between two homologous DNA duplexes (Holliday junction).. The RuvA-RuvB-RuvC complex processes Holliday junction (HJ) DNA during genetic recombination and DNA repair. Endonuclease that resolves HJ intermediates. Cleaves cruciform DNA by making single-stranded nicks across the HJ at symmetrical positions within the homologous arms, yielding a 5'-phosphate and a 3'-hydroxyl group; requires a central core of homology in the junction. The consensus cleavage sequence is 5'-(A/T)TT(C/G)-3'. Cleavage occurs on the 3'-side of the TT dinucleotide at the point of strand exchange. HJ branch migration catalyzed by RuvA-RuvB allows RuvC to scan DNA until it finds its consensus sequence, where it cleaves and resolves the cruciform DNA. This Brucella abortus (strain 2308) protein is Crossover junction endodeoxyribonuclease RuvC.